Reading from the N-terminus, the 286-residue chain is ATP synthase gamma chain (286 aa).

It belongs to the ATPase gamma chain family. In terms of assembly, F-type ATPases have 2 components, CF(1) - the catalytic core - and CF(0) - the membrane proton channel. CF(1) has five subunits: alpha(3), beta(3), gamma(1), delta(1), epsilon(1). CF(0) has three main subunits: a, b and c.

It localises to the cell inner membrane. Functionally, produces ATP from ADP in the presence of a proton gradient across the membrane. The gamma chain is believed to be important in regulating ATPase activity and the flow of protons through the CF(0) complex. The polypeptide is ATP synthase gamma chain (Dechloromonas aromatica (strain RCB)).